Here is a 143-residue protein sequence, read N- to C-terminus: MKLETKCHGIIEYKEEDVIEFKKGIPGFNELKRFINFPIEDNEVFSVLHSIENNEIGFIVTSPFSIIKDYEINLDDSVIERLNIENEKDVLVLNTVTLHSKLENITVNLCAPIVINIKTKLGEQIILNNGKYQIKHPLFKEGI.

Belongs to the FliW family. As to quaternary structure, interacts with translational regulator CsrA and flagellin(s).

It localises to the cytoplasm. In terms of biological role, acts as an anti-CsrA protein, binds CsrA and prevents it from repressing translation of its target genes, one of which is flagellin. Binds to flagellin and participates in the assembly of the flagellum. In Clostridium novyi (strain NT), this protein is Flagellar assembly factor FliW.